A 427-amino-acid chain; its full sequence is G2/mitotic-specific cyclin-3 (427 aa).

Over residues 1-12 (MHHNSQSLSSGH) the composition is skewed to polar residues. 2 disordered regions span residues 1–29 (MHHNSQSLSSGHIRSPEDENVAPIGNLKH) and 89–126 (SVAQRKEADHNDLLTDREQEEPVEDDGESEEDEEEDQE). The segment covering 89–105 (SVAQRKEADHNDLLTDR) has biased composition (basic and acidic residues). Over residues 106–126 (EQEEPVEDDGESEEDEEEDQE) the composition is skewed to acidic residues.

It belongs to the cyclin family. Cyclin AB subfamily.

Essential for the control of the cell cycle at the G2/M (mitosis) transition. Interacts with the CDC2 protein kinase to form MPF. G2/M cyclins accumulate steadily during G2 and are abruptly destroyed at mitosis. This Saccharomyces cerevisiae (strain ATCC 204508 / S288c) (Baker's yeast) protein is G2/mitotic-specific cyclin-3 (CLB3).